The sequence spans 311 residues: Taste receptor type 2 member 9 (311 aa).

Residues 1–9 are Extracellular-facing; the sequence is MPSTIEAIY. The helical transmembrane segment at 10-32 threads the bilayer; that stretch reads IILIAGELTIGIWGNGFIVLVNC. The Cytoplasmic portion of the chain corresponds to 33–52; that stretch reads IDWLKRRDVSLIDIILISLA. The chain crosses the membrane as a helical span at residues 53 to 72; the sequence is ISRICLLCVISLDGFFILLF. The Extracellular portion of the chain corresponds to 73–86; it reads PGTYDTNVLESIMD. A helical transmembrane segment spans residues 87-109; the sequence is AVWTFANNSSLWFTSCLSIFYLL. The Cytoplasmic segment spans residues 110–128; sequence KIANISHPFFFWLKLKINK. A helical membrane pass occupies residues 129–146; the sequence is VILAILLGSFLISLIISF. The Extracellular portion of the chain corresponds to 147–179; the sequence is PINGMWYNLFKVSHEENITWAFKVSTIPGAFKQ. N163 carries N-linked (GlcNAc...) asparagine glycosylation. The helical transmembrane segment at 180 to 202 threads the bilayer; it reads LTLNLGAMVPFILCLISFFLLLF. The Cytoplasmic segment spans residues 203-233; that stretch reads SLVRHTKQIQLHATGFRDPSTEAHMRAVKAV. The chain crosses the membrane as a helical span at residues 234–256; it reads IIFLLLLILYYPVFLVMTSSTLI. The Extracellular portion of the chain corresponds to 257–260; the sequence is PQGK. The helical transmembrane segment at 261–283 threads the bilayer; the sequence is LVLMIGDIVTVIFPSSHSFILIM. At 284–311 the chain is on the cytoplasmic side; the sequence is GNSKLRAAFLKMLRFVKGFLRRRKPFVP.

The protein belongs to the G-protein coupled receptor T2R family.

Its subcellular location is the membrane. Gustducin-coupled receptor implicated in the perception of bitter compounds in the oral cavity and the gastrointestinal tract. Signals through PLCB2 and the calcium-regulated cation channel TRPM5. In Macaca mulatta (Rhesus macaque), this protein is Taste receptor type 2 member 9 (TAS2R9).